Reading from the N-terminus, the 306-residue chain is MPDYDLITILGPTASGKTPFAAALAHELNTEIISADSRQIYRGMDLGTGKDLADYTVDGHPIPYHLIDIADPGYKYNVFEYQRDFLISYESIKQKGCLPVLCGGTGMYLESVLKGYKLMPVPENPELRARLANHSLEELTEILKQYKTLHNSTDVDTVKRAIRAIEIEEYYAVHPVPEREFPKLNSLIIGVDIDRELRREKITRRLKQRLDEGMVDEVRRLTEQGISPDDLIYYGLEYKFLTLYVIGKLTYEEMFTELETAIHQFAKRQMTWFRGMERRGFTIHWVSAELPMEEKIAFVIEKLRGN.

11 to 18 serves as a coordination point for ATP; the sequence is GPTASGKT. A substrate-binding site is contributed by 13 to 18; the sequence is TASGKT. An interaction with substrate tRNA region spans residues 36 to 39; sequence DSRQ.

This sequence belongs to the IPP transferase family. Monomer. The cofactor is Mg(2+).

The enzyme catalyses adenosine(37) in tRNA + dimethylallyl diphosphate = N(6)-dimethylallyladenosine(37) in tRNA + diphosphate. Functionally, catalyzes the transfer of a dimethylallyl group onto the adenine at position 37 in tRNAs that read codons beginning with uridine, leading to the formation of N6-(dimethylallyl)adenosine (i(6)A). In Bacteroides thetaiotaomicron (strain ATCC 29148 / DSM 2079 / JCM 5827 / CCUG 10774 / NCTC 10582 / VPI-5482 / E50), this protein is tRNA dimethylallyltransferase 2.